The primary structure comprises 539 residues: Hydroxylamine reductase (539 aa).

Residues C3, C6, C13, and C19 each contribute to the [4Fe-4S] cluster site. Residues H240, E264, C308, C395, C423, C448, E482, and K484 each contribute to the hybrid [4Fe-2O-2S] cluster site. Residue C395 is modified to Cysteine persulfide.

It belongs to the HCP family. [4Fe-4S] cluster serves as cofactor. It depends on hybrid [4Fe-2O-2S] cluster as a cofactor.

Its subcellular location is the cytoplasm. The enzyme catalyses A + NH4(+) + H2O = hydroxylamine + AH2 + H(+). Functionally, catalyzes the reduction of hydroxylamine to form NH(3) and H(2)O. The polypeptide is Hydroxylamine reductase (Thermodesulfovibrio yellowstonii (strain ATCC 51303 / DSM 11347 / YP87)).